The primary structure comprises 70 residues: Cytochrome c oxidase subunit 8B, mitochondrial (70 aa).

A mitochondrion-targeting transit peptide spans methionine 1–arginine 24. The Mitochondrial matrix segment spans residues isoleucine 25–serine 35. The chain crosses the membrane as a helical span at residues alanine 36–serine 59. Over histidine 60–alanine 70 the chain is Mitochondrial intermembrane.

Belongs to the cytochrome c oxidase VIII family. In terms of assembly, component of the cytochrome c oxidase (complex IV, CIV), a multisubunit enzyme composed of 14 subunits. The complex is composed of a catalytic core of 3 subunits MT-CO1, MT-CO2 and MT-CO3, encoded in the mitochondrial DNA, and 11 supernumerary subunits COX4I, COX5A, COX5B, COX6A, COX6B, COX6C, COX7A, COX7B, COX7C, COX8 and NDUFA4, which are encoded in the nuclear genome. The complex exists as a monomer or a dimer and forms supercomplexes (SCs) in the inner mitochondrial membrane with NADH-ubiquinone oxidoreductase (complex I, CI) and ubiquinol-cytochrome c oxidoreductase (cytochrome b-c1 complex, complex III, CIII), resulting in different assemblies (supercomplex SCI(1)III(2)IV(1) and megacomplex MCI(2)III(2)IV(2)).

The protein resides in the mitochondrion inner membrane. It participates in energy metabolism; oxidative phosphorylation. In terms of biological role, component of the cytochrome c oxidase, the last enzyme in the mitochondrial electron transport chain which drives oxidative phosphorylation. The respiratory chain contains 3 multisubunit complexes succinate dehydrogenase (complex II, CII), ubiquinol-cytochrome c oxidoreductase (cytochrome b-c1 complex, complex III, CIII) and cytochrome c oxidase (complex IV, CIV), that cooperate to transfer electrons derived from NADH and succinate to molecular oxygen, creating an electrochemical gradient over the inner membrane that drives transmembrane transport and the ATP synthase. Cytochrome c oxidase is the component of the respiratory chain that catalyzes the reduction of oxygen to water. Electrons originating from reduced cytochrome c in the intermembrane space (IMS) are transferred via the dinuclear copper A center (CU(A)) of subunit 2 and heme A of subunit 1 to the active site in subunit 1, a binuclear center (BNC) formed by heme A3 and copper B (CU(B)). The BNC reduces molecular oxygen to 2 water molecules using 4 electrons from cytochrome c in the IMS and 4 protons from the mitochondrial matrix. This is Cytochrome c oxidase subunit 8B, mitochondrial (Cox8b) from Rattus norvegicus (Rat).